A 401-amino-acid polypeptide reads, in one-letter code: Chromate transport protein (401 aa).

Helical transmembrane passes span Leu26–Gly46, Gly67–Gly87, Ile93–Ala113, Leu124–Ile144, Val172–Trp192, Ala214–Phe234, Ala237–Val257, Val272–Ala294, Ala299–Phe321, Ile330–Ile350, Ser356–Phe376, and Leu379–Leu399.

This sequence belongs to the chromate ion transporter (CHR) (TC 2.A.51) family.

Its subcellular location is the cell inner membrane. Functionally, this protein reduces chromate accumulation and is essential for chromate resistance. This is Chromate transport protein from Cupriavidus metallidurans (strain ATCC 43123 / DSM 2839 / NBRC 102507 / CH34) (Ralstonia metallidurans).